The primary structure comprises 343 residues: tRNA N6-adenosine threonylcarbamoyltransferase (343 aa).

Positions 120 and 124 each coordinate Fe cation. Substrate is bound by residues 142 to 146 (VVSGG), Asp175, Gly188, Asp192, and Asn281. Fe cation is bound at residue Asp310.

This sequence belongs to the KAE1 / TsaD family. Requires Fe(2+) as cofactor.

The protein localises to the cytoplasm. The catalysed reaction is L-threonylcarbamoyladenylate + adenosine(37) in tRNA = N(6)-L-threonylcarbamoyladenosine(37) in tRNA + AMP + H(+). Required for the formation of a threonylcarbamoyl group on adenosine at position 37 (t(6)A37) in tRNAs that read codons beginning with adenine. Is involved in the transfer of the threonylcarbamoyl moiety of threonylcarbamoyl-AMP (TC-AMP) to the N6 group of A37, together with TsaE and TsaB. TsaD likely plays a direct catalytic role in this reaction. The polypeptide is tRNA N6-adenosine threonylcarbamoyltransferase (Bacillus thuringiensis (strain Al Hakam)).